An 844-amino-acid polypeptide reads, in one-letter code: MKSLNFQSVVSQFFEYESTVVVRWPLPFIIIPPLLTFSIVTLTVTNFHLNVTNDTLQVFLPDDMRSLRDLKELLRLFPPRDAQRDTYSIFGSKFVYTVIEDDSSDGNILSSSGIQRMSKLHKFVMGLETSLGDNVASNCLRNKDDEACTMHPIAFALEDTTPEFAIQFLLRYPNLKFGDFVIDNAMVFGDVRIEPKSQDRDGNSPIRSSKAVRMTYILESSESTERWIDLFLSAIPRYKETNSTIFWSSSKSLAKEMERNGELLIPWMPWTSLVLVVFCMFACSSLNIVKSQPFIGFFAMFNATMATIASTSLLLYLQYPFLPLVFIMPFLVVSIGTDNMFLMLKSWRMTKKSSNEEQRYIHALTESAASLFLTSLTDGLSFAIGSISDFHAVRVFCTYCAMAILFMFLFQVTFFNAVMSLCCRREVSGKHPVFCCYEITPPEETQVLEKQSNFDFSSIVAKHLFKILNPLPSRIGVFFIFLAYLFISIHFAIGLPLGLDLKLLAPDDSYVSKELEAQERLFADYGGFCFALVRAENISLKDPMVRRNLIGLYRDLGGSEYSSPSEFWLDPFEKKNRGKKYSESDFSDELHTFLAKEPHLKFRNDIRFTMMGKIEAMKMMFRVRKLGKDNDAPRAEYMRKVMENSQFNGFVYDTSFLLVDQQMTTVYNVIVDVVSAILTMLSICVLMVPRPVSAMCIAFAILSVNIGVIGALAATNTRLDIISMITIVMSVGFSVDYVTHTTFHFVIQRDNRLEKCLLVMTEPILQSALSTAIGVSLLSFVHSYIVRTFVNTVFFVVGLGILHGLIFLPVLLDTIVPDSEYMVPYEPQHEDEENPNHYEDLYGL.

Positions 264–421 (LIPWMPWTSL…VTFFNAVMSL (158 aa)) constitute an SSD domain.

This sequence belongs to the patched family.

In Caenorhabditis elegans, this protein is Patched-related protein 9 (ptr-9).